Here is a 226-residue protein sequence, read N- to C-terminus: Glutathione S-transferase kappa 1 (226 aa).

Glutathione contacts are provided by residues 15-17, asparagine 53, and 199-200; these read SPY and SD.

The protein belongs to the GST superfamily. Kappa family.

It catalyses the reaction RX + glutathione = an S-substituted glutathione + a halide anion + H(+). This Caenorhabditis elegans protein is Glutathione S-transferase kappa 1 (gstk-1).